A 117-amino-acid polypeptide reads, in one-letter code: Venom nerve growth factor (117 aa).

Disulfide bonds link cysteine 12/cysteine 77, cysteine 55/cysteine 105, and cysteine 65/cysteine 107. Asparagine 21 carries N-linked (GlcNAc...) asparagine glycosylation.

The protein belongs to the NGF-beta family. Homodimer; non-covalently linked. Expressed by the venom gland.

The protein localises to the secreted. Functionally, nerve growth factor is important for the development and maintenance of the sympathetic and sensory nervous systems. It stimulates division and differentiation of sympathetic and embryonic sensory neurons as well as basal forebrain cholinergic neurons in the brain. Its relevance in the snake venom is not clear. However, it has been shown to inhibit metalloproteinase-dependent proteolysis of platelet glycoprotein Ib alpha, suggesting a metalloproteinase inhibition to prevent metalloprotease autodigestion and/or protection against prey proteases. Binds a lipid between the two protein chains in the homodimer. The lipid-bound form promotes histamine relase from mouse mast cells, contrary to the lipid-free form. This is Venom nerve growth factor from Daboia russelii (Russel's viper).